Reading from the N-terminus, the 806-residue chain is Leucine--tRNA ligase (806 aa).

A 'HIGH' region motif is present at residues 40–51 (PYPSGAGLHVGH). A 'KMSKS' region motif is present at residues 578-582 (KMSKS). Lys-581 is an ATP binding site.

Belongs to the class-I aminoacyl-tRNA synthetase family.

The protein resides in the cytoplasm. It carries out the reaction tRNA(Leu) + L-leucine + ATP = L-leucyl-tRNA(Leu) + AMP + diphosphate. The sequence is that of Leucine--tRNA ligase from Staphylococcus aureus (strain MSSA476).